Here is a 320-residue protein sequence, read N- to C-terminus: Malate dehydrogenase (320 aa).

Residues 10 to 15 (GSGMIG) and Asp-34 each bind NAD(+). Substrate-binding residues include Arg-83 and Arg-89. NAD(+) is bound by residues Asn-96 and 119–121 (ITN). 2 residues coordinate substrate: Asn-121 and Arg-152. The active-site Proton acceptor is the His-176.

This sequence belongs to the LDH/MDH superfamily. MDH type 3 family.

It carries out the reaction (S)-malate + NAD(+) = oxaloacetate + NADH + H(+). Its function is as follows. Catalyzes the reversible oxidation of malate to oxaloacetate. This Brucella anthropi (strain ATCC 49188 / DSM 6882 / CCUG 24695 / JCM 21032 / LMG 3331 / NBRC 15819 / NCTC 12168 / Alc 37) (Ochrobactrum anthropi) protein is Malate dehydrogenase.